Reading from the N-terminus, the 296-residue chain is Ribonuclease HIII (296 aa).

Residues 80-296 form the RNase H type-2 domain; that stretch reads LALIGSDEVG…NTKKAYQRLK (217 aa). Positions 86, 87, and 191 each coordinate a divalent metal cation.

Belongs to the RNase HII family. RnhC subfamily. The cofactor is Mn(2+). Requires Mg(2+) as cofactor.

The protein localises to the cytoplasm. The enzyme catalyses Endonucleolytic cleavage to 5'-phosphomonoester.. Functionally, endonuclease that specifically degrades the RNA of RNA-DNA hybrids. The sequence is that of Ribonuclease HIII from Streptococcus thermophilus (strain ATCC BAA-491 / LMD-9).